Reading from the N-terminus, the 450-residue chain is Glutamyl-tRNA reductase (450 aa).

Substrate contacts are provided by residues 45-48 (TCNR), S107, 112-114 (ERE), and Q118. The active-site Nucleophile is C46. 196-201 (GTGAYA) is a binding site for NADP(+).

This sequence belongs to the glutamyl-tRNA reductase family. Homodimer.

It carries out the reaction (S)-4-amino-5-oxopentanoate + tRNA(Glu) + NADP(+) = L-glutamyl-tRNA(Glu) + NADPH + H(+). It functions in the pathway porphyrin-containing compound metabolism; protoporphyrin-IX biosynthesis; 5-aminolevulinate from L-glutamyl-tRNA(Glu): step 1/2. Its function is as follows. Catalyzes the NADPH-dependent reduction of glutamyl-tRNA(Glu) to glutamate 1-semialdehyde (GSA). The polypeptide is Glutamyl-tRNA reductase (Micrococcus luteus (strain ATCC 4698 / DSM 20030 / JCM 1464 / CCM 169 / CCUG 5858 / IAM 1056 / NBRC 3333 / NCIMB 9278 / NCTC 2665 / VKM Ac-2230) (Micrococcus lysodeikticus)).